The primary structure comprises 883 residues: Alanine--tRNA ligase (883 aa).

4 residues coordinate Zn(2+): His-562, His-566, Cys-664, and His-668.

The protein belongs to the class-II aminoacyl-tRNA synthetase family. As to quaternary structure, homotetramer. Requires Zn(2+) as cofactor.

The protein resides in the cytoplasm. The catalysed reaction is tRNA(Ala) + L-alanine + ATP = L-alanyl-tRNA(Ala) + AMP + diphosphate. Its function is as follows. Catalyzes the attachment of alanine to tRNA(Ala) in a two-step reaction: alanine is first activated by ATP to form Ala-AMP and then transferred to the acceptor end of tRNA(Ala). Also edits incorrectly charged Ser-tRNA(Ala) and Gly-tRNA(Ala) via its editing domain. This chain is Alanine--tRNA ligase, found in Buchnera aphidicola subsp. Schizaphis graminum (strain Sg).